Reading from the N-terminus, the 609-residue chain is UvrABC system protein C (609 aa).

A GIY-YIG domain is found at 16 to 94 (SSAGVYRMYD…IKQYMPKYNV (79 aa)). A UVR domain is found at 203–238 (KQVISELVAKMEEAAGQQAYEQAARFRDQIMALRRV).

The protein belongs to the UvrC family. As to quaternary structure, interacts with UvrB in an incision complex.

It is found in the cytoplasm. In terms of biological role, the UvrABC repair system catalyzes the recognition and processing of DNA lesions. UvrC both incises the 5' and 3' sides of the lesion. The N-terminal half is responsible for the 3' incision and the C-terminal half is responsible for the 5' incision. The protein is UvrABC system protein C of Shewanella sp. (strain ANA-3).